We begin with the raw amino-acid sequence, 217 residues long: D-methionine transport system permease protein MetI (217 aa).

Residues valine 13–glutamine 204 form the ABC transmembrane type-1 domain. The next 5 helical transmembrane spans lie at threonine 20–valine 40, glycine 58–phenylalanine 78, methionine 81–alanine 101, isoleucine 152–leucine 172, and alanine 186–serine 206.

The protein belongs to the binding-protein-dependent transport system permease family. CysTW subfamily.

Its subcellular location is the cell inner membrane. Functionally, part of the binding-protein-dependent transport system for D-methionine and the toxic methionine analog alpha-methyl-methionine. Probably responsible for the translocation of the substrate across the membrane. The polypeptide is D-methionine transport system permease protein MetI (metI) (Yersinia pestis).